A 420-amino-acid chain; its full sequence is Arginine biosynthesis bifunctional protein ArgJ (420 aa).

The substrate site is built by threonine 167, lysine 193, threonine 204, glutamate 284, asparagine 415, and threonine 420. Threonine 204 (nucleophile) is an active-site residue.

It belongs to the ArgJ family. Heterotetramer of two alpha and two beta chains.

The protein resides in the cytoplasm. It carries out the reaction N(2)-acetyl-L-ornithine + L-glutamate = N-acetyl-L-glutamate + L-ornithine. The catalysed reaction is L-glutamate + acetyl-CoA = N-acetyl-L-glutamate + CoA + H(+). The protein operates within amino-acid biosynthesis; L-arginine biosynthesis; L-ornithine and N-acetyl-L-glutamate from L-glutamate and N(2)-acetyl-L-ornithine (cyclic): step 1/1. Its pathway is amino-acid biosynthesis; L-arginine biosynthesis; N(2)-acetyl-L-ornithine from L-glutamate: step 1/4. Catalyzes two activities which are involved in the cyclic version of arginine biosynthesis: the synthesis of N-acetylglutamate from glutamate and acetyl-CoA as the acetyl donor, and of ornithine by transacetylation between N(2)-acetylornithine and glutamate. This is Arginine biosynthesis bifunctional protein ArgJ from Prochlorococcus marinus (strain NATL2A).